An 88-amino-acid polypeptide reads, in one-letter code: Acyl-CoA-binding domain-containing protein 7 (88 aa).

One can recognise an ACB domain in the interval 3–88 (LQADFDQAAQ…ARELIEKYGI (86 aa)). Residues Arg15, 30–34 (YGLYK), Lys56, and Tyr75 contribute to the an acyl-CoA site.

Belongs to the ACBD7 family.

In terms of biological role, binds medium- and long-chain acyl-CoA esters. The chain is Acyl-CoA-binding domain-containing protein 7 (Acbd7) from Mus musculus (Mouse).